The chain runs to 154 residues: Ribonuclease H (154 aa).

Residues Ser9–Glu150 enclose the RNase H type-1 domain. 4 residues coordinate Mg(2+): Asp18, Glu56, Asp78, and Asp142.

It belongs to the RNase H family. Monomer. Requires Mg(2+) as cofactor.

The protein localises to the cytoplasm. It carries out the reaction Endonucleolytic cleavage to 5'-phosphomonoester.. Functionally, endonuclease that specifically degrades the RNA of RNA-DNA hybrids. The sequence is that of Ribonuclease H from Polynucleobacter asymbioticus (strain DSM 18221 / CIP 109841 / QLW-P1DMWA-1) (Polynucleobacter necessarius subsp. asymbioticus).